Reading from the N-terminus, the 230-residue chain is Preflagellin peptidase (230 aa).

A topological domain (cytoplasmic) is located at residue M1. Residues 2–18 (IEYIIGALGLIIASVQD) form a helical membrane-spanning segment. Topologically, residues 19 to 23 (FRSRE) are extracellular. A helical transmembrane segment spans residues 24-46 (IEDYIWIFLAVFGVLFAIYSSIT). Residues 47–49 (LLD) are Cytoplasmic-facing. A helical membrane pass occupies residues 50–72 (YSILINSISGFVICFILGYMMFL). Topologically, residues 73 to 78 (SGIGGG) are extracellular. A helical membrane pass occupies residues 79–89 (DGKMLIGLGAL). The Cytoplasmic segment spans residues 90–110 (VPKFQMPIYTSLGTLLNLNYV). The helical transmembrane segment at 111–139 (PTFPIMVFINGIFFMVFLPFVILFRNILN) threads the bilayer. Residues 140 to 204 (GARPKTGKEF…EEIWVTPQIP (65 aa)) lie on the Extracellular side of the membrane. A helical transmembrane segment spans residues 205–216 (LIIPITLSYLVT). Topologically, residues 217–230 (PIIGDRILDFLIPF) are cytoplasmic.

This sequence belongs to the peptidase A24 family. Archaeal preflagellin peptidase subfamily.

It localises to the cell membrane. It carries out the reaction Cleaves the signal peptide of 3 to 12 amino acids from the N-terminal of preflagellin, usually at Arg-Gly-|- or Lys-Gly-|-, to release flagellin.. Functionally, cleaves the N-terminal leader peptide from preflagellins. The protein is Preflagellin peptidase (flaK) of Methanococcus maripaludis (strain C6 / ATCC BAA-1332).